Consider the following 201-residue polypeptide: Ras-related protein Rab-9A (201 aa).

Alanine 2 carries the post-translational modification N-acetylalanine. GTP is bound by residues glycine 17, valine 18, glycine 19, lysine 20, serine 21, serine 22, aspartate 33, serine 34, histidine 38, and threonine 39. Residue serine 21 coordinates Mg(2+). A Switch 1 motif is present at residues 31-42 (KFDSQLFHTIGV). The residue at position 34 (serine 34) is a Phosphoserine. The Mg(2+) site is built by threonine 39 and aspartate 62. The Switch 2 signature appears at 64-78 (AGQERFRSLRTPFYR). 6 residues coordinate GTP: glycine 65, asparagine 124, lysine 125, aspartate 127, alanine 155, and lysine 156. Serine 179 is modified (phosphoserine). Threonine 187 carries the post-translational modification Phosphothreonine. S-geranylgeranyl cysteine attachment occurs at residues cysteine 200 and cysteine 201.

The protein belongs to the small GTPase superfamily. Rab family. In terms of assembly, interacts (preferentially in its GTP-bound form) with GCC2 (via its GRIP domain). Interacts (GTP-bound form) with SGSM1; the GDP-bound form has much lower affinity for SGSM1. Interacts with SGSM2. The GTP-bound form but not the GDP-bound form interacts with HPS4. The GTP-bound form but not the GDP-bound form interacts with BLOC-3 complex (heterodimer of HPS1 and HPS4) but does not interact with HPS1 alone. Interacts (GTP-bound form) with NDE1; two RAB9A-GTP molecules lie on the opposite sides of the NDE1 homodimer; the interaction leads to RAB9A-dynein motor tethering. Interacts (GTP-bound form) with NDEL1. The cofactor is Mg(2+).

The protein localises to the cell membrane. The protein resides in the endoplasmic reticulum membrane. It is found in the golgi apparatus membrane. Its subcellular location is the late endosome. It localises to the cytoplasmic vesicle. The protein localises to the phagosome membrane. The protein resides in the phagosome. It is found in the cytoplasmic vesicle membrane. Its subcellular location is the melanosome. The catalysed reaction is GTP + H2O = GDP + phosphate + H(+). With respect to regulation, regulated by guanine nucleotide exchange factors (GEFs) which promote the exchange of bound GDP for free GTP. Regulated by GTPase activating proteins (GAPs) which increase the GTP hydrolysis activity. Inhibited by GDP dissociation inhibitors (GDIs). Its function is as follows. The small GTPases Rab are key regulators of intracellular membrane trafficking, from the formation of transport vesicles to their fusion with membranes. Rabs cycle between an inactive GDP-bound form and an active GTP-bound form that is able to recruit to membranes different sets of downstream effectors directly responsible for vesicle formation, movement, tethering and fusion. RAB9A is involved in the transport of proteins between the endosomes and the trans-Golgi network (TGN). Specifically uses NDE1/NDEL1 as an effector to interact with the dynein motor complex in order to control retrograde trafficking of RAB9-associated late endosomes to the TGN. Involved in the recruitment of SGSM2 to melanosomes and is required for the proper trafficking of melanogenic enzymes TYR, TYRP1 and DCT/TYRP2 to melanosomes in melanocytes. The sequence is that of Ras-related protein Rab-9A from Mus musculus (Mouse).